The sequence spans 988 residues: Junction-mediating and -regulatory protein (988 aa).

The segment at 1–126 is interaction with p300/EP300; the sequence is MSFALEETLE…RSTRSLLGDP (126 aa). Residues 51–178 are disordered; sequence AQRQRSGSRE…RPAPREAQVS (128 aa). 2 positions are modified to phosphoserine: Ser115 and Ser121. The segment covering 160 to 175 has biased composition (low complexity); it reads AAGAAAAAARPAPREA. Coiled coils occupy residues 324–360, 489–541, and 590–621; these read SELRQKGYEEVLQRARKRIQELLDKHKNTESMVELLD, LQMM…YEVQ, and ASAYLQREELQKLQQKARQLEARRGRVSAKKS. An interaction with p300/EP300 region spans residues 478-567; sequence EKLQYAVSKE…SIKRLISEKR (90 aa). At Ser713 the chain carries Phosphoserine. Residues 731–742 show a composition bias toward basic and acidic residues; that stretch reads EEKTEEVGEGRV. Disordered regions lie at residues 731 to 755 and 800 to 865; these read EEKTEEVGEGRVKRGPSQTTEPQSL and INPL…LFDS. Over residues 746–755 the composition is skewed to polar residues; that stretch reads PSQTTEPQSL. The segment covering 803–827 has biased composition (pro residues); sequence LPSPLPPTPPPPPPPPPPPPPPPLP. Basic and acidic residues predominate over residues 832-851; sequence SGPETLEKDLPRKEGNEKRI. Phosphoserine is present on Ser888. The WH2 domain maps to 921 to 938; the sequence is DSNNILAQIRKGVKLKKV. The disordered stretch occupies residues 967-988; it reads IKEASPESEDEEEALPCTDWEN. Over residues 972–988 the composition is skewed to acidic residues; it reads PESEDEEEALPCTDWEN. Ser974 carries the phosphoserine modification.

Belongs to the JMY family. As to quaternary structure, interacts with p300/EP300, the complex activates p53/TP53 transcriptional activity. Interacts with TTC5; the interaction facilitates the association between JMY and p300/EP300. Interacts with MAP1LC3B; the interaction results in the activation of JYM's nucleation activity in the cytoplasm. Interacts with TTC5/STRAP; the interaction results in the inhibition of JYM's nucleation activity in the cytoplasm due to competition with MAP1LC3B binding. Post-translationally, ubiquitinated by MDM2, leading to its subsequent degradation by the proteasome. In case of DNA damage, the interaction with MDM2 is altered, preventing degradation and allowing interaction with p300/EP300 and its function in p53/TP53 stress response.

It is found in the nucleus. The protein localises to the cytoplasmic vesicle. It localises to the cytoplasm. The protein resides in the cytoskeleton. Its subcellular location is the endomembrane system. It is found in the autophagosome membrane. Acts both as a nuclear p53/TP53-cofactor and a cytoplasmic regulator of actin dynamics depending on conditions. In nucleus, acts as a cofactor that increases p53/TP53 response via its interaction with p300/EP300. Increases p53/TP53-dependent transcription and apoptosis, suggesting an important role in p53/TP53 stress response such as DNA damage. In cytoplasm, acts as a nucleation-promoting factor for both branched and unbranched actin filaments. Activates the Arp2/3 complex to induce branched actin filament networks. Also catalyzes actin polymerization in the absence of Arp2/3, creating unbranched filaments. Contributes to cell motility by controlling actin dynamics. May promote the rapid formation of a branched actin network by first nucleating new mother filaments and then activating Arp2/3 to branch off these filaments. Upon nutrient stress, directly recruited by MAP1LC3B to the phagophore membrane surfaces to promote actin assembly during autophagy. The p53/TP53-cofactor and actin activator activities are regulated via its subcellular location. This is Junction-mediating and -regulatory protein (JMY) from Homo sapiens (Human).